Reading from the N-terminus, the 1438-residue chain is DNA polymerase III PolC-type (1438 aa).

The Exonuclease domain maps to tyrosine 422–phenylalanine 578.

It belongs to the DNA polymerase type-C family. PolC subfamily.

The protein localises to the cytoplasm. The catalysed reaction is DNA(n) + a 2'-deoxyribonucleoside 5'-triphosphate = DNA(n+1) + diphosphate. Required for replicative DNA synthesis. This DNA polymerase also exhibits 3' to 5' exonuclease activity. In Staphylococcus saprophyticus subsp. saprophyticus (strain ATCC 15305 / DSM 20229 / NCIMB 8711 / NCTC 7292 / S-41), this protein is DNA polymerase III PolC-type.